A 339-amino-acid chain; its full sequence is MRQKLEEIKNSAINELKTTLSKDQLEAIRVKYLGKKGELTQILRGMGALSQEERPIVGKVANEVRSYIEETIKEAFSDIKNKEKSIRLENETIDITMPGKKQAVGKRHPLDLTLESMKDIFISMGFTIEEGPEVELDKYNFEALNIPKNHPARGEQDTFYINDNLVLRTQTSPIQIRTMENQKPPIKMIAPGKVYRSDSVDATHSPIFYQMEGLVVDKGITFSDLKGTLELFAKRMFGNKVKTKFRPHHFPFTEPSAEMDATCFVCNGEGCKVCKGSGWIELLGCGMVHPQVLRNCNIDPEVYSGFAFGFGVDRMVMMKYGIDDIRLLYESDMRFLNQF.

Glutamate 254 is a binding site for Mg(2+).

Belongs to the class-II aminoacyl-tRNA synthetase family. Phe-tRNA synthetase alpha subunit type 1 subfamily. As to quaternary structure, tetramer of two alpha and two beta subunits. Requires Mg(2+) as cofactor.

The protein localises to the cytoplasm. It catalyses the reaction tRNA(Phe) + L-phenylalanine + ATP = L-phenylalanyl-tRNA(Phe) + AMP + diphosphate + H(+). This chain is Phenylalanine--tRNA ligase alpha subunit, found in Clostridium botulinum (strain Langeland / NCTC 10281 / Type F).